The sequence spans 479 residues: GTPase Obg (479 aa).

One can recognise an Obg domain in the interval P2–V159. An OBG-type G domain is found at A160 to S340. GTP-binding positions include G166–S173, F191–V195, D212–G215, N292–D295, and S321–V323. Residues S173 and T193 each contribute to the Mg(2+) site. One can recognise an OCT domain in the interval P358–P436. Positions T438–D479 are disordered. Basic and acidic residues predominate over residues T451 to K467.

The protein belongs to the TRAFAC class OBG-HflX-like GTPase superfamily. OBG GTPase family. Monomer. It depends on Mg(2+) as a cofactor.

Its subcellular location is the cytoplasm. An essential GTPase which binds GTP, GDP and possibly (p)ppGpp with moderate affinity, with high nucleotide exchange rates and a fairly low GTP hydrolysis rate. Plays a role in control of the cell cycle, stress response, ribosome biogenesis and in those bacteria that undergo differentiation, in morphogenesis control. The sequence is that of GTPase Obg from Mycobacterium ulcerans (strain Agy99).